The sequence spans 239 residues: Ribonuclease HII (239 aa).

An RNase H type-2 domain is found at 30–221; that stretch reads GPVAGVDEVG…VRRVATRSNG (192 aa). The a divalent metal cation site is built by Asp-36, Glu-37, and Asp-130. Residues 219-239 form a disordered region; sequence SNGAAAAEREADPPQERDGTG. Over residues 225–239 the composition is skewed to basic and acidic residues; sequence AEREADPPQERDGTG.

It belongs to the RNase HII family. Requires Mn(2+) as cofactor. The cofactor is Mg(2+).

The protein resides in the cytoplasm. The enzyme catalyses Endonucleolytic cleavage to 5'-phosphomonoester.. Its function is as follows. Endonuclease that specifically degrades the RNA of RNA-DNA hybrids. In Mycobacterium marinum (strain ATCC BAA-535 / M), this protein is Ribonuclease HII.